We begin with the raw amino-acid sequence, 322 residues long: Lipoyl synthase 2 (322 aa).

The tract at residues 1 to 36 (MKVILDLLNNDPRTTQRTERPRHPEKANRPDTPMES) is disordered. Positions 14–34 (TTQRTERPRHPEKANRPDTPM) are enriched in basic and acidic residues. 7 residues coordinate [4Fe-4S] cluster: Cys67, Cys72, Cys78, Cys93, Cys97, Cys100, and Ser306. One can recognise a Radical SAM core domain in the interval 79–295 (WAKKHATFMI…EKTAYAKGFL (217 aa)).

Belongs to the radical SAM superfamily. Lipoyl synthase family. [4Fe-4S] cluster serves as cofactor.

It is found in the cytoplasm. The enzyme catalyses [[Fe-S] cluster scaffold protein carrying a second [4Fe-4S](2+) cluster] + N(6)-octanoyl-L-lysyl-[protein] + 2 oxidized [2Fe-2S]-[ferredoxin] + 2 S-adenosyl-L-methionine + 4 H(+) = [[Fe-S] cluster scaffold protein] + N(6)-[(R)-dihydrolipoyl]-L-lysyl-[protein] + 4 Fe(3+) + 2 hydrogen sulfide + 2 5'-deoxyadenosine + 2 L-methionine + 2 reduced [2Fe-2S]-[ferredoxin]. It participates in protein modification; protein lipoylation via endogenous pathway; protein N(6)-(lipoyl)lysine from octanoyl-[acyl-carrier-protein]: step 2/2. Its function is as follows. Catalyzes the radical-mediated insertion of two sulfur atoms into the C-6 and C-8 positions of the octanoyl moiety bound to the lipoyl domains of lipoate-dependent enzymes, thereby converting the octanoylated domains into lipoylated derivatives. This Bradyrhizobium diazoefficiens (strain JCM 10833 / BCRC 13528 / IAM 13628 / NBRC 14792 / USDA 110) protein is Lipoyl synthase 2.